The primary structure comprises 489 residues: Glutamyl-tRNA(Gln) amidotransferase subunit A (489 aa).

Residues lysine 78 and serine 153 each act as charge relay system in the active site. The active-site Acyl-ester intermediate is the serine 177.

Belongs to the amidase family. GatA subfamily. Heterotrimer of A, B and C subunits.

It carries out the reaction L-glutamyl-tRNA(Gln) + L-glutamine + ATP + H2O = L-glutaminyl-tRNA(Gln) + L-glutamate + ADP + phosphate + H(+). In terms of biological role, allows the formation of correctly charged Gln-tRNA(Gln) through the transamidation of misacylated Glu-tRNA(Gln) in organisms which lack glutaminyl-tRNA synthetase. The reaction takes place in the presence of glutamine and ATP through an activated gamma-phospho-Glu-tRNA(Gln). The chain is Glutamyl-tRNA(Gln) amidotransferase subunit A from Enterococcus faecalis (strain ATCC 700802 / V583).